A 254-amino-acid chain; its full sequence is 4-hydroxy-tetrahydrodipicolinate reductase (254 aa).

8-13 (GAFGRM) is an NAD(+) binding site. Residue K36 participates in NADP(+) binding. NAD(+)-binding positions include 89 to 91 (GTT) and 115 to 118 (STNY). Residue H147 is the Proton donor/acceptor of the active site. H148 is a binding site for (S)-2,3,4,5-tetrahydrodipicolinate. The active-site Proton donor is the K151. 157 to 158 (GT) contacts (S)-2,3,4,5-tetrahydrodipicolinate.

This sequence belongs to the DapB family.

The protein localises to the cytoplasm. The enzyme catalyses (S)-2,3,4,5-tetrahydrodipicolinate + NAD(+) + H2O = (2S,4S)-4-hydroxy-2,3,4,5-tetrahydrodipicolinate + NADH + H(+). It carries out the reaction (S)-2,3,4,5-tetrahydrodipicolinate + NADP(+) + H2O = (2S,4S)-4-hydroxy-2,3,4,5-tetrahydrodipicolinate + NADPH + H(+). It functions in the pathway amino-acid biosynthesis; L-lysine biosynthesis via DAP pathway; (S)-tetrahydrodipicolinate from L-aspartate: step 4/4. Catalyzes the conversion of 4-hydroxy-tetrahydrodipicolinate (HTPA) to tetrahydrodipicolinate. This chain is 4-hydroxy-tetrahydrodipicolinate reductase, found in Methanospirillum hungatei JF-1 (strain ATCC 27890 / DSM 864 / NBRC 100397 / JF-1).